The sequence spans 23 residues: GVVDILKGAAKDIAGHLASKVMN.

Asn-23 is subject to Asparagine amide.

As to expression, expressed by the skin glands.

It localises to the secreted. Functionally, antibacterial peptide that inhibits the Gram-negative bacterium A.actinomycetemcomitans ATCC 29522 (MIC=210 uM). No activity against the bacteria E.coli ATCC 25922 and S.aureus ATCC 25923, or the fungi C.albicans ATCC 18804 and C.lusitaniae ATCC 56936. Does not show hemolytic activity towards rabbit erythrocytes. This is Ocellatin-LB2 from Leptodactylus labyrinthicus (Labyrinth frog).